Here is a 334-residue protein sequence, read N- to C-terminus: Glyceraldehyde-3-phosphate dehydrogenase 2 (334 aa).

NAD(+)-binding positions include 12–13 (RI), Asp-35, and Arg-79. D-glyceraldehyde 3-phosphate is bound by residues 152–154 (SCT), Thr-183, Arg-198, 211–212 (SG), and Arg-234. Residue Cys-153 is the Nucleophile of the active site. Position 315 (Asn-315) interacts with NAD(+).

This sequence belongs to the glyceraldehyde-3-phosphate dehydrogenase family. As to quaternary structure, homotetramer.

It is found in the cytoplasm. It carries out the reaction D-glyceraldehyde 3-phosphate + phosphate + NAD(+) = (2R)-3-phospho-glyceroyl phosphate + NADH + H(+). It participates in carbohydrate degradation; glycolysis; pyruvate from D-glyceraldehyde 3-phosphate: step 1/5. With respect to regulation, inhibited by pentalenolactone (PL). In terms of biological role, catalyzes the oxidative phosphorylation of glyceraldehyde 3-phosphate (G3P) to 1,3-bisphosphoglycerate (BPG) using the cofactor NAD. The first reaction step involves the formation of a hemiacetal intermediate between G3P and a cysteine residue, and this hemiacetal intermediate is then oxidized to a thioester, with concomitant reduction of NAD to NADH. The reduced NADH is then exchanged with the second NAD, and the thioester is attacked by a nucleophilic inorganic phosphate to produce BPG. In Streptomyces arenae, this protein is Glyceraldehyde-3-phosphate dehydrogenase 2 (gap2).